We begin with the raw amino-acid sequence, 302 residues long: Endochitinase 2 (302 aa).

The 42-residue stretch at 1–42 folds into the Chitin-binding type-1 domain; it reads EQCGRQAGGALCPGGLCCSQFGWCGSTADYCTVPGCQSQCSG. Disulfide bonds link Cys-3/Cys-18, Cys-12/Cys-24, Cys-17/Cys-31, Cys-36/Cys-40, Cys-73/Cys-136, Cys-148/Cys-156, and Cys-255/Cys-287. Glu-117 functions as the Proton donor in the catalytic mechanism. The propeptide at 296 to 302 is removed in mature form; the sequence is GVSVDSM.

It belongs to the glycosyl hydrolase 19 family. Chitinase class I subfamily.

It carries out the reaction Random endo-hydrolysis of N-acetyl-beta-D-glucosaminide (1-&gt;4)-beta-linkages in chitin and chitodextrins.. Its function is as follows. Defense against chitin-containing fungal pathogens. This chain is Endochitinase 2, found in Gossypium hirsutum (Upland cotton).